The chain runs to 1054 residues: Putative disease resistance RPP13-like protein 1 (1054 aa).

Leucine-zipper stretches follow at residues 9-20 and 39-53; these read LAAFLQALFQTL and LERLSTALLTITAVL. The stretch at 117-147 forms a coiled coil; the sequence is DFLDGNSEHLETRLEKVTIRLERLASQRNIL. Residues 152–462 enclose the NB-ARC domain; that stretch reads LTAMIPKQRL…AEGFLQQTRS (311 aa). 203-210 contacts ATP; sequence GIGGVGKT. LRR repeat units lie at residues 579–600, 603–624, 626–648, 650–672, and 676–697; these read RLRVLSLSHYKIARLPPDFFKN, HARFLDLSRTELEKLPKSLCYM, NLQTLLLSYCSSLKELPTDISNL, NLRYLDLIGTKLRQMPRRFGRLK, and TLTTFFVSASDGSRISELGGLH. A disordered region spans residues 1018 to 1054; that stretch reads PQYHHPQFHLPRSNVSGSPKSHGSHRSYDSRSSSRYD. Residues 1043–1054 are compositionally biased toward basic and acidic residues; it reads RSYDSRSSSRYD.

The protein belongs to the disease resistance NB-LRR family. RPP13 subfamily.

Potential disease resistance protein. The protein is Putative disease resistance RPP13-like protein 1 (RPPL1) of Arabidopsis thaliana (Mouse-ear cress).